The following is a 302-amino-acid chain: Putative S-adenosyl-L-methionine-dependent methyltransferase MAP_1622c (302 aa).

S-adenosyl-L-methionine contacts are provided by residues aspartate 129 and 158–159 (DL).

It belongs to the UPF0677 family.

Exhibits S-adenosyl-L-methionine-dependent methyltransferase activity. The protein is Putative S-adenosyl-L-methionine-dependent methyltransferase MAP_1622c of Mycolicibacterium paratuberculosis (strain ATCC BAA-968 / K-10) (Mycobacterium paratuberculosis).